A 59-amino-acid chain; its full sequence is uncharacterized protein (59 aa).

This is an uncharacterized protein from Bacillus subtilis (strain 168).